Reading from the N-terminus, the 197-residue chain is uncharacterized protein (197 aa).

A disordered region spans residues 1 to 135 (MKTPWKFLAR…ERGKRANARV (135 aa)). The span at 14–32 (RQPSGKTQESSAGNDTGSK) shows a compositional bias: polar residues. A compositionally biased stretch (basic and acidic residues) spans 83–96 (IHADEAQTTARDEA). Residues 116–132 (SQRKPRIKRRERGKRAN) show a composition bias toward basic residues.

This sequence to Rhizobium NGR234A y4nF and y4aO.

This is an uncharacterized protein from Rhizobium meliloti (strain 1021) (Ensifer meliloti).